We begin with the raw amino-acid sequence, 254 residues long: Triosephosphate isomerase (254 aa).

12–14 contacts substrate; sequence NWK. The active-site Electrophile is His99. Glu169 acts as the Proton acceptor in catalysis. Substrate is bound by residues Gly175, Ser214, and 235 to 236; that span reads GG.

The protein belongs to the triosephosphate isomerase family. As to quaternary structure, homodimer.

It is found in the cytoplasm. The enzyme catalyses D-glyceraldehyde 3-phosphate = dihydroxyacetone phosphate. The protein operates within carbohydrate biosynthesis; gluconeogenesis. It functions in the pathway carbohydrate degradation; glycolysis; D-glyceraldehyde 3-phosphate from glycerone phosphate: step 1/1. Its function is as follows. Involved in the gluconeogenesis. Catalyzes stereospecifically the conversion of dihydroxyacetone phosphate (DHAP) to D-glyceraldehyde-3-phosphate (G3P). The chain is Triosephosphate isomerase from Brucella abortus biovar 1 (strain 9-941).